A 483-amino-acid polypeptide reads, in one-letter code: Endoplasmic reticulum lectin 1 (483 aa).

Residues 1 to 33 (MEEGDGGLRSLVPGGPLLLVLYGLLEASGGGRA) form the signal peptide. MRH domains follow at residues 111–246 (SSCS…LCSH) and 342–469 (SYCF…ICKI). Residues C113 and C126 are joined by a disulfide bond. An N-linked (GlcNAc...) asparagine glycan is attached at N195. 5 cysteine pairs are disulfide-bonded: C199–C232, C215–C244, C344–C357, C421–C455, and C436–C467.

In terms of assembly, may form a complex with OS9, HSPA5, SYVN1, and SEL1L with which it interacts directly. Interacts (via PRKCSH 2 domain) with KREMEN2 (when glycosylated). Interacts with HSPA5. N-glycosylated.

The protein resides in the endoplasmic reticulum lumen. Its function is as follows. Probable lectin that binds selectively to improperly folded lumenal proteins. May function in endoplasmic reticulum quality control and endoplasmic reticulum-associated degradation (ERAD) of both non-glycosylated proteins and glycoproteins. The protein is Endoplasmic reticulum lectin 1 (Erlec1) of Mus musculus (Mouse).